Consider the following 446-residue polypeptide: MPKRSFTKDDIRKFAEEENVRYLRLQFTDILGTIKNVEVPVSQLEKVLDNEMMFDGSSIEGFVRIEESDMYLHPDLDTWVIFPWTAGQGKVARLICDVFKTDGTPFEGDPRANLKRVLRRMEDMGFTDFNLGPEPEFFLFKLDEKGEPTLELNDDGGYFDLAPTDLGENCRRDIVLELEDMGFDIEASHHEVAPGQHEIDFKYADAVTACDNIQTFKLVVKTIARKHNLHATFMPKPLFGVNGSGMHFNVSLFKGKENAFFDPEGDLQLTDTAYQFTAGVLKNARGFTAVCNPIVNSYKRLVPGYEAPCYIAWSGKNRSPLVRVPTSRGLSTRIEVRSVDPAANPYMALAAILEAGLDGIENKLEVPEPVNQNIYEMNREEREAVGIQDLPSTLYTALKAMRENKSIKNALGNHIYNQFINSKSIEWDYYRTQVSEWEREQYIKQY.

The GS beta-grasp domain occupies 18–103 (ENVRYLRLQF…LICDVFKTDG (86 aa)). The 337-residue stretch at 110 to 446 (PRANLKRVLR…WEREQYIKQY (337 aa)) folds into the GS catalytic domain. Mg(2+) is bound by residues E134 and E136. E186 lines the ATP pocket. Mg(2+) is bound by residues E191 and E198. L-glutamate contacts are provided by residues 242-243 (NG) and G243. H247 provides a ligand contact to Mg(2+). S251 is a binding site for ATP. L-glutamate-binding residues include R300, E306, and R318. ATP-binding residues include R318 and R323. A Mg(2+)-binding site is contributed by E335. Position 337 (R337) interacts with L-glutamate.

Belongs to the glutamine synthetase family. In terms of assembly, oligomer of 12 subunits arranged in the form of two hexagons. In its feedback-inhibited form, interacts with TnrA in order to block its DNA-binding activity. Requires Mg(2+) as cofactor.

Its subcellular location is the cytoplasm. The catalysed reaction is L-glutamate + NH4(+) + ATP = L-glutamine + ADP + phosphate + H(+). Its activity is regulated as follows. Inhibited by glutamine. Functionally, glutamine synthetase (GS) is an unusual multitasking protein that functions as an enzyme, a transcription coregulator, and a chaperone in ammonium assimilation and in the regulation of genes involved in nitrogen metabolism. It catalyzes the ATP-dependent biosynthesis of glutamine from glutamate and ammonia. Feedback-inhibited GlnA also interacts with and regulates the activity of the transcriptional regulator TnrA. During nitrogen limitation, TnrA is in its DNA-binding active state and turns on the transcription of genes required for nitrogen assimilation. Under conditions of nitrogen excess, feedback-inhibited GlnA forms a stable complex with TnrA, which inhibits its DNA-binding activity. In contrast, feedback-inhibited GlnA acts as a chaperone to stabilize the DNA-binding activity of GlnR, which represses the transcription of nitrogen assimilation genes. This Staphylococcus epidermidis (strain ATCC 35984 / DSM 28319 / BCRC 17069 / CCUG 31568 / BM 3577 / RP62A) protein is Glutamine synthetase.